We begin with the raw amino-acid sequence, 235 residues long: Retron Ec48 transmembrane protein (235 aa).

The next 2 membrane-spanning stretches (helical) occupy residues 11 to 31 (IVGV…FETI) and 64 to 84 (AFGW…ALMT).

The protein localises to the cell inner membrane. Functionally, membrane component of antiviral defense system Retron Ec48, composed of a non-coding RNA (ncRNA), a reverse transcriptase (RT) and this membrane protein. Expression of this retron confers protection against bacteriophages lambda, T2, T4, T5 and T7. At multiplicity of infection (MOI) of 0.02 cultures grow normally when infected with lambda without collapsing, at MOI 2 cultures enter growth stasis. At MOI 3 cell membranes are permeabilized within 15 minutes of infection but do not lyse, suggesting the phage are not able to finish a replication cycle. Antiviral defense is suppressed by mutations that knockout the lambda gam expression or phage T7 gp5.9 expression; both viral genes inhibit host RecBCD. The Ec48 retron may sense the integrity of the RecBCD enzyme; when RecBCD is perturbed by viral proteins the Ec48 effector (the membrane protein) is activated, leading to abortive infection and bacterial growth arrest. The polypeptide is Retron Ec48 transmembrane protein (Escherichia coli).